We begin with the raw amino-acid sequence, 467 residues long: Sugar transporter ERD6-like 11 (467 aa).

Transmembrane regions (helical) follow at residues 26–46, 75–95, 105–125, 128–148, 155–177, 183–203, 266–286, 301–321, 328–348, 359–379, 402–422, and 428–448; these read ITAC…SYGC, FLNV…VILG, FFCV…WLDL, ISLG…IAEI, GAFT…FFGT, VMAV…FFIP, LVVG…GITY, LGSM…LILV, PLLL…GVSF, LIPI…AFGI, IVAL…NFMF, and GTFY…WMLV.

It belongs to the major facilitator superfamily. Sugar transporter (TC 2.A.1.1) family.

The protein resides in the membrane. In terms of biological role, sugar transporter. This Arabidopsis thaliana (Mouse-ear cress) protein is Sugar transporter ERD6-like 11.